A 472-amino-acid chain; its full sequence is Eukaryotic translation initiation factor 2 subunit 3, X-linked (472 aa).

At alanine 2 the chain carries N-acetylalanine. At serine 16 the chain carries Phosphoserine. Positions 39 to 248 constitute a tr-type G domain; the sequence is QATINIGTIG…IVKKIPVPPR (210 aa). Residues 48–55 are G1; it reads GHVAHGKS. 51 to 56 provides a ligand contact to GTP; sequence AHGKST. Positions 76-80 are G2; sequence NITIK. Positions 134-137 are G3; that stretch reads DCPG. Residues 190 to 193 and 225 to 227 contribute to the GTP site; these read NKID and SAQ. Residues 190 to 193 form a G4 region; it reads NKID. The segment at 225–227 is G5; that stretch reads SAQ. An interacts with Cdc123 region spans residues 457–469; it reads GQIRRGVTIKPTV.

It belongs to the TRAFAC class translation factor GTPase superfamily. Classic translation factor GTPase family. EIF2G subfamily. In terms of assembly, eukaryotic translation initiation factor 2 eIF2 is a heterotrimeric complex composed of an alpha (EIF2S1), a beta (EIF2S2) and a gamma (EIF2S3) chain. eIF2 is member of the 43S pre-initiation complex (43S PIC). Interacts (via C-terminus) with CDC123; the interaction is direct. As to expression, widely expressed.

The protein resides in the cytoplasm. Its subcellular location is the cytosol. The catalysed reaction is GTP + H2O = GDP + phosphate + H(+). Its function is as follows. Member of the eIF2 complex that functions in the early steps of protein synthesis by forming a ternary complex with GTP and initiator tRNA. This complex binds to a 40S ribosomal subunit, followed by mRNA binding to form the 43S pre-initiation complex (43S PIC). Junction of the 60S ribosomal subunit to form the 80S initiation complex is preceded by hydrolysis of the GTP bound to eIF2 and release of an eIF2-GDP binary complex. In order for eIF2 to recycle and catalyze another round of initiation, the GDP bound to eIF2 must exchange with GTP by way of a reaction catalyzed by eIF-2B. Along with its paralog on chromosome Y, may contribute to spermatogenesis up to the round spermatid stage. This chain is Eukaryotic translation initiation factor 2 subunit 3, X-linked (Eif2s3), found in Rattus norvegicus (Rat).